The sequence spans 351 residues: MTRQNTSESDNTQRPPIPQYDTVDDIDELTDAMDKEDHHHHHHHHEHHHQHQGIAQYDTVEEVETLETVHHRTSLNQEVPTPQRRSHPQYDNLDDIDDQEYITEVEVKSNRGSTLTTRPHVTIKQDEIEDIGERQVTVIEIASQKGSTKRVAPRKDYAPSIPLPEHPAQQSAPPTQQSRPQTTSHKPPNPEMEFDIGVKNIAPVLIHKMNMDDRDPKDSAQYLNTSFFEVFNEPSEQYHSIACVWTLSFKIFEIVRIYSYKILTLIFGLIIAFLGGILFALFAFLNIWIFRPILILTRMAFAQIVLIWPMFLIYIVRPFFYSVGAIFSTARLHTSRGEQVVEVWEKHIHHV.

A compositionally biased stretch (polar residues) spans 1-14 (MTRQNTSESDNTQR). 3 disordered regions span residues 1-55 (MTRQ…QGIA), 71-93 (HRTS…YDNL), and 144-193 (QKGS…PEME). Residues 1 to 261 (MTRQNTSESD…FEIVRIYSYK (261 aa)) are Cytoplasmic-facing. Positions 22 to 31 (TVDDIDELTD) are enriched in acidic residues. Over residues 38 to 51 (HHHHHHHHEHHHQH) the composition is skewed to basic residues. Residues 167-184 (PAQQSAPPTQQSRPQTTS) show a composition bias toward low complexity. The helical intramembrane region spans 262–290 (ILTLIFGLIIAFLGGILFALFAFLNIWIF). Residues 291-351 (RPILILTRMA…EVWEKHIHHV (61 aa)) are Cytoplasmic-facing.

It belongs to the caveolin family. In terms of assembly, homooligomer. As to expression, expressed in intracellular bodies in intestinal cells.

It is found in the golgi apparatus membrane. Its subcellular location is the cell membrane. The protein localises to the membrane. It localises to the caveola. The protein resides in the apical cell membrane. Its function is as follows. May act as a scaffolding protein within caveolar membranes. Interacts directly with G-protein alpha subunits and can regulate their activity. Thought to have a role in the uptake of lipids and proteins in the intestinal cells; operates in the apical uptake of lipid markers and trafficking of yolk proteins. Affects fecundity and egg laying. The sequence is that of Caveolin-2 (cav-2) from Caenorhabditis elegans.